We begin with the raw amino-acid sequence, 407 residues long: Peptidase T (407 aa).

His77 serves as a coordination point for Zn(2+). Residue Asp79 is part of the active site. Zn(2+) is bound at residue Asp138. Glu172 functions as the Proton acceptor in the catalytic mechanism. Positions 173, 195, and 377 each coordinate Zn(2+).

It belongs to the peptidase M20B family. Requires Zn(2+) as cofactor.

It localises to the cytoplasm. It catalyses the reaction Release of the N-terminal residue from a tripeptide.. Its function is as follows. Cleaves the N-terminal amino acid of tripeptides. The polypeptide is Peptidase T (Aeromonas hydrophila subsp. hydrophila (strain ATCC 7966 / DSM 30187 / BCRC 13018 / CCUG 14551 / JCM 1027 / KCTC 2358 / NCIMB 9240 / NCTC 8049)).